The chain runs to 158 residues: NAD(P)H-quinone oxidoreductase subunit J, chloroplastic (158 aa).

The protein belongs to the complex I 30 kDa subunit family. NDH is composed of at least 16 different subunits, 5 of which are encoded in the nucleus.

Its subcellular location is the plastid. It is found in the chloroplast thylakoid membrane. It catalyses the reaction a plastoquinone + NADH + (n+1) H(+)(in) = a plastoquinol + NAD(+) + n H(+)(out). The catalysed reaction is a plastoquinone + NADPH + (n+1) H(+)(in) = a plastoquinol + NADP(+) + n H(+)(out). NDH shuttles electrons from NAD(P)H:plastoquinone, via FMN and iron-sulfur (Fe-S) centers, to quinones in the photosynthetic chain and possibly in a chloroplast respiratory chain. The immediate electron acceptor for the enzyme in this species is believed to be plastoquinone. Couples the redox reaction to proton translocation, and thus conserves the redox energy in a proton gradient. The polypeptide is NAD(P)H-quinone oxidoreductase subunit J, chloroplastic (Cucumis sativus (Cucumber)).